The following is a 396-amino-acid chain: Alanine racemase (396 aa).

K46 functions as the Proton acceptor; specific for D-alanine in the catalytic mechanism. The residue at position 46 (K46) is an N6-(pyridoxal phosphate)lysine. Residue R145 coordinates substrate. Y280 functions as the Proton acceptor; specific for L-alanine in the catalytic mechanism. M328 provides a ligand contact to substrate.

This sequence belongs to the alanine racemase family. It depends on pyridoxal 5'-phosphate as a cofactor.

The enzyme catalyses L-alanine = D-alanine. The protein operates within amino-acid biosynthesis; D-alanine biosynthesis; D-alanine from L-alanine: step 1/1. Functionally, catalyzes the interconversion of L-alanine and D-alanine. May also act on other amino acids. This Brucella suis (strain ATCC 23445 / NCTC 10510) protein is Alanine racemase (alr).